We begin with the raw amino-acid sequence, 310 residues long: MFNHVTVLLKETVDGLDIKPGGTYVDCTLGGGGHSSYLLSQLTEGGRLIAFDQDEIAIQNAKEKFSSYGEQFITVKSNFRYLSEKLQELGITEVDGILFDLGVSSPQLDTPERGFSYHHDAPLDMRMDQDAPLTAYDVVNSWSYEQLVRIFFQYGEEKFSKQIARKIEAYRENKAIETTGELVELIKEGIPAPARRTGGHPAKRVFQAIRIAVNDELKVFEEALESAIEMVKPGGRVSVITFHSLEDRICKTTFKRNSTTPQLPPGLPIIPDEFKPKLKLITRKPILPSDIELEENNRARSAKLRIAEKR.

Residues 32 to 34 (GGH), aspartate 52, phenylalanine 79, aspartate 100, and glutamine 107 contribute to the S-adenosyl-L-methionine site.

Belongs to the methyltransferase superfamily. RsmH family.

It is found in the cytoplasm. The catalysed reaction is cytidine(1402) in 16S rRNA + S-adenosyl-L-methionine = N(4)-methylcytidine(1402) in 16S rRNA + S-adenosyl-L-homocysteine + H(+). Functionally, specifically methylates the N4 position of cytidine in position 1402 (C1402) of 16S rRNA. This Bacillus cereus (strain ATCC 10987 / NRS 248) protein is Ribosomal RNA small subunit methyltransferase H.